Reading from the N-terminus, the 116-residue chain is MACPGFLWALVISTCLEFSMAQTVTQSQPEMSVQEAETVTLSCTYDTSESDYYLFWYKQPPSRQMILVIRQEAYKQQNATENRFSVNFQKAAKSFSLKISDSQLGDAAMYFCAYRS.

An N-terminal signal peptide occupies residues 1–21 (MACPGFLWALVISTCLEFSMA). An Ig-like domain is found at 22–116 (QTVTQSQPEM…AAMYFCAYRS (95 aa)). Residues cysteine 43 and cysteine 112 are joined by a disulfide bond. N-linked (GlcNAc...) asparagine glycosylation is present at asparagine 78.

As to quaternary structure, alpha-beta TR is a heterodimer composed of an alpha and beta chain; disulfide-linked. The alpha-beta TR is associated with the transmembrane signaling CD3 coreceptor proteins to form the TR-CD3 (TcR or TCR). The assembly of alpha-beta TR heterodimers with CD3 occurs in the endoplasmic reticulum where a single alpha-beta TR heterodimer associates with one CD3D-CD3E heterodimer, one CD3G-CD3E heterodimer and one CD247 homodimer forming a stable octameric structure. CD3D-CD3E and CD3G-CD3E heterodimers preferentially associate with TR alpha and TR beta chains, respectively. The association of the CD247 homodimer is the last step of TcR assembly in the endoplasmic reticulum and is required for transport to the cell surface.

It localises to the cell membrane. Functionally, v region of the variable domain of T cell receptor (TR) alpha chain that participates in the antigen recognition. Alpha-beta T cell receptors are antigen specific receptors which are essential to the immune response and are present on the cell surface of T lymphocytes. Recognize peptide-major histocompatibility (MH) (pMH) complexes that are displayed by antigen presenting cells (APC), a prerequisite for efficient T cell adaptive immunity against pathogens. Binding of alpha-beta TR to pMH complex initiates TR-CD3 clustering on the cell surface and intracellular activation of LCK that phosphorylates the ITAM motifs of CD3G, CD3D, CD3E and CD247 enabling the recruitment of ZAP70. In turn ZAP70 phosphorylates LAT, which recruits numerous signaling molecules to form the LAT signalosome. The LAT signalosome propagates signal branching to three major signaling pathways, the calcium, the mitogen-activated protein kinase (MAPK) kinase and the nuclear factor NF-kappa-B (NF-kB) pathways, leading to the mobilization of transcription factors that are critical for gene expression and essential for T cell growth and differentiation. The T cell repertoire is generated in the thymus, by V-(D)-J rearrangement. This repertoire is then shaped by intrathymic selection events to generate a peripheral T cell pool of self-MH restricted, non-autoaggressive T cells. Post-thymic interaction of alpha-beta TR with the pMH complexes shapes TR structural and functional avidity. The sequence is that of T cell receptor alpha variable 38-2/delta variable 8 from Homo sapiens (Human).